Here is a 713-residue protein sequence, read N- to C-terminus: Glutamine--fructose-6-phosphate aminotransferase [isomerizing] (713 aa).

C2 acts as the For GATase activity in catalysis. A Glutamine amidotransferase type-2 domain is found at C2–G316. SIS domains are found at residues W389–S528 and C561–P703.

In terms of assembly, homotetramer.

It catalyses the reaction D-fructose 6-phosphate + L-glutamine = D-glucosamine 6-phosphate + L-glutamate. Its pathway is nucleotide-sugar biosynthesis; UDP-N-acetyl-alpha-D-glucosamine biosynthesis; alpha-D-glucosamine 6-phosphate from D-fructose 6-phosphate: step 1/1. Functionally, involved in amino sugar synthesis (formation of chitin, supplies the amino sugars of asparagine-linked oligosaccharides of glycoproteins). This Candida albicans (strain SC5314 / ATCC MYA-2876) (Yeast) protein is Glutamine--fructose-6-phosphate aminotransferase [isomerizing] (GFA1).